We begin with the raw amino-acid sequence, 426 residues long: MKHLTEMVRQHKAGKTNGIYAVCSAHPLVLEAAIRYASANQTPLLIEATSNQVDQFGGYTGMTPADFRGFVCQLADSLNFPQDALILGGDHLGPNRWQNLPAAQAMANADDLIKSYVAAGFKKIHLDCSMSCQDDPIPLTDDIVAERAARLAKVAEETCLEHFGEADLEYVIGTEVPVPGGAHETLSELAVTTPDAARATLEAHRHAFEKQGLNAIWPRIIALVVQPGVEFDHTNVIDYQPAKATALSQMVENYETLIFEAHSTDYQTPQSLRQLVIDHFAILKVGPALTFALREALFSLAAIEEELVPAKACSGLRQVLENVMLDRPEYWQSHYHGDGNARRLARGYSYSDRVRYYWPDSQIDDAFAHLVRNLADSPIPLPLISQYLPLQYVKVRSGELQPTPRELIINHIQDILAQYHTACEGQ.

The protein belongs to the GatZ/KbaZ family. KbaZ subfamily. As to quaternary structure, forms a complex with KbaY.

The protein operates within carbohydrate metabolism; D-tagatose 6-phosphate degradation; D-glyceraldehyde 3-phosphate and glycerone phosphate from D-tagatose 6-phosphate: step 2/2. Component of the tagatose-1,6-bisphosphate aldolase KbaYZ that is required for full activity and stability of the Y subunit. Could have a chaperone-like function for the proper and stable folding of KbaY. When expressed alone, KbaZ does not show any aldolase activity. This Escherichia coli O127:H6 (strain E2348/69 / EPEC) protein is D-tagatose-1,6-bisphosphate aldolase subunit KbaZ.